The following is a 109-amino-acid chain: U-scoloptoxin(16)-Ssd1a (109 aa).

The signal sequence occupies residues 1–23 (MTTSATVIIMVLCVGSLVIFSEG).

Post-translationally, contains 4 disulfide bonds. In terms of tissue distribution, expressed by the venom gland.

It is found in the secreted. The chain is U-scoloptoxin(16)-Ssd1a from Scolopendra dehaani (Thai centipede).